Consider the following 410-residue polypeptide: Zinc finger protein 322 (410 aa).

C2H2-type zinc fingers lie at residues Tyr81–His103, Tyr109–His131, Tyr137–His159, Tyr165–His187, Phe193–His215, Tyr221–His243, Tyr249–His271, and Tyr277–His299. A C2H2-type 9; degenerate zinc finger spans residues Phe303–His325. Residues Tyr361–His383 form a C2H2-type 10; degenerate zinc finger. Ser400 carries the phosphoserine modification.

The protein belongs to the krueppel C2H2-type zinc-finger protein family. Interacts with POU5F1.

The protein localises to the nucleus. It is found in the cytoplasm. Functionally, transcriptional activator. Important for maintenance of pluripotency in embryonic stem cells. Binds directly to the POU5F1 distal enhancer and the NANOG proximal promoter, and enhances expression of both genes. Can also bind to numerous other gene promoters and regulates expression of many other pluripotency factors, either directly or indirectly. Promotes inhibition of MAPK signaling during embryonic stem cell differentiation. This is Zinc finger protein 322 (Znf322) from Mus musculus (Mouse).